The sequence spans 113 residues: uncharacterized protein (113 aa).

Over residues Met-1 to Glu-19 the composition is skewed to basic and acidic residues. The tract at residues Met-1–Ser-94 is disordered. Residues Gly-20–Ser-41 show a composition bias toward basic residues. Residues Phe-52 to Ser-66 show a composition bias toward low complexity. A compositionally biased stretch (basic residues) spans Lys-75–Lys-92.

This is an uncharacterized protein from Macaca fascicularis (Crab-eating macaque).